The chain runs to 398 residues: MNKKKLGIRLLSLLALGGFVLANPVFADQNFARNEKEAKDSAITFIQKSAAIKAGARSAEDIKLDKVNLGGELSGSNMYVYNISTGGFVIVSGDKRSPEILGYSTSGSFDANGKENIASFMESYVEQIKENKKLDTTYAGTAEIKQPVVKSLLDSKGIHYNQGNPYNLLTPVIEKVKPGEQSFVGQHAATGCVATATAQIMKYHNYPNKGLKDYTYTLSSNNPYFNHPKNLFAAISTRQYNWNNILPTYSGRESNVQKMAISELMADVGISVDMDYGPSSGSAGSSRVQRALKENFGYNQSVHQINRSDFSKQDWEAQIDKELSQNQPVYYQGVGKVGGHAFVIDGADGRNFYHVNWGWGGVSDGFFRLDALNPSALGTGGGAGGFNGYQSAVVGIKP.

A signal peptide spans 1 to 27 (MNKKKLGIRLLSLLALGGFVLANPVFA). A propeptide spanning residues 28–145 (DQNFARNEKE…TTYAGTAEIK (118 aa)) is cleaved from the precursor. Cysteine 192 functions as the Nucleophile in the catalytic mechanism. Cysteine 192 bears the Cysteine methyl disulfide; in zymogen form mark. Residues serine 282 and glycine 339 each contribute to the a protein site. Histidine 340 acts as the Proton acceptor in catalysis. The interval 368 to 390 (RLDALNPSALGTGGGAGGFNGYQ) is C-terminal active site loop.

The protein belongs to the peptidase C10 family. As to quaternary structure, monomer. In terms of processing, the mature protease is derived from the precursor sequence by cleavage, either in cis via an autocatalytic mechanism, or in trans by mature SpeB or host proteases (trypsin, plasmin or subtilisin). Maturation can involve a number of protein cleavage intermediates. Mature SpeB probably plays the most important role in protein maturation in physiological conditions. Post-translationally, methylthiolation at Cys-192 of the inactive zymogen form is probably involved in the mechanism of secretion of the proteinase into the culture fluid.

It localises to the secreted. The protein localises to the host extracellular space. It is found in the host cytoplasm. The enzyme catalyses Preferential cleavage with hydrophobic residues at P2, P1 and P1'.. With respect to regulation, synthesized as an inactive zymogen to protect the intracellular components of the bacteria from proteolytic activity during protein production. Once secreted into the extracellular milieu, cleaved into the active protease: maturation can be mediated in cis by autocatalytic cleavage, or in trans by mature SpeB or host proteases. Protease activity is strongly inhibited by zinc and copper, which prevent its maturation into an active protease: inhibition by metal ions may be required to prevent proteolysis of streptococcal proteins. Cysteine protease that acts as a key streptococcal virulence factor by cleaving host proteins involved in immune response. Triggers inflammation by mediating cleavage of host proteins, which can both promote host pathogenesis by triggering sterile inflammation and/or restrict streptococcal infection, depending on host immune statue and infection site. Cleaves host gasdermin-A (GSDMA) in epithelial cells, promoting GSDMA activation and formation of gasdermin pores, triggering pyroptosis. Pyroptosis triggers the elimination of the infected skin cell, depriving the pathogen of its protective niche, while inducing an inflammatory response. This ultimately prevents bacterial penetration of the epithelial barrier and a subsequent systemic dissemination of the pathogen. Also mediates cleavage of the cytokine precursor interleukin-1 beta (IL1B) to its mature form, resulting in inflammation and septic shock. SpeB-mediated maturation of IL1B plays a dual role depending on infection site: while IL1B inflammatory response prevents bacterial growth during invasive skin infections, it promotes streptococcal infection of the nasopharynx by disrupting colonization resistance mediated by the microbiota. Inhibits host autophagy be catalyzing cleavage and inactivation of key autophagy factors, such as CALCOCO2, NBR1 and SQSTM1. Cleaves and inhibits a number of complement factors, such as C2, C3-beta chain of C3, C4, C5 or SERPING1, thereby promoting evasion of host immunity. May also impair adaptive immunity by catalyzing cleavage and degradation of host immunoglobulins to promote immune system evasion; the relevance of this activity is however unsure in vivo. Catalyzes maturation and release of the peptide hormone bradykinin from the precursor Kininogen-1 (KNG1) to produce hypotension during septic shock. Also involved in bacterial translocation across the host epithelial barrier by mediating cleavage and degradation of host epithelial junction proteins, such as CDH1 and OCLN. Additionally, has been involved in degradation of fibronectin and vitronectin, two host extracellular matrix proteins involved in tissue integrity. Also able to catalyze cleavage and degradation of streptococcal proteins, such as C5a peptidase, EndoS or SmeZ. Degradation of streptococcal proteins is however strictly regulated to preserve integrity of other virulence factors. The protein is Streptopain (speB) of Streptococcus pyogenes serotype M3 (strain ATCC BAA-595 / MGAS315).